The sequence spans 510 residues: Maturase K (510 aa).

This sequence belongs to the intron maturase 2 family. MatK subfamily.

Its subcellular location is the plastid. The protein resides in the chloroplast. In terms of biological role, usually encoded in the trnK tRNA gene intron. Probably assists in splicing its own and other chloroplast group II introns. The chain is Maturase K from Penstemon heterophyllus (Foothill penstemon).